The following is a 536-amino-acid chain: Probable protein S-acyltransferase 23 (536 aa).

The interval 1–23 (MDSSEIEVVPLDSNSHQSPTESP) is disordered. The segment covering 12 to 23 (DSNSHQSPTESP) has biased composition (polar residues). 6 ANK repeats span residues 57 to 86 (NGFY…DVNS), 90 to 119 (IQQT…RIEA), 123 to 153 (NGFR…DYNA), 157 to 186 (EGRS…CQNR), 190 to 219 (TGCT…KEEL), and 225 to 254 (TGST…TRKN). 2 helical membrane passes run 270-290 (YAPM…TSIV) and 298-318 (ITAM…YALI). The DHHC domain maps to 363–413 (QLCPTCKIIRPVRSKHCPTCKRCVEQFDHHCPWISNCVGKKNKRYFLVFVI). The active-site S-palmitoyl cysteine intermediate is Cys393. A run of 2 helical transmembrane segments spans residues 407 to 427 (YFLV…TTAV) and 454 to 474 (AAVF…LTIS).

This sequence belongs to the DHHC palmitoyltransferase family. As to expression, expressed in roots, shoots, flowers and pollen.

The protein localises to the golgi apparatus membrane. The enzyme catalyses L-cysteinyl-[protein] + hexadecanoyl-CoA = S-hexadecanoyl-L-cysteinyl-[protein] + CoA. Functionally, palmitoyl acyltransferase. This is Probable protein S-acyltransferase 23 (PAT23) from Arabidopsis thaliana (Mouse-ear cress).